The sequence spans 204 residues: VAEKAKDERELLEKTSELIAGMGDKIGEHLGDKYKAIAKDIADNIKNFQGKTIRSFDDAMASLNKITANPAMKINKADRDALVNAWKHVDAQDMANKLGNLSKAFKVADVVMKVEKVREKSIEGYETGNWGPLMLEVESWVLSGIASSVALGIFSATLGAYALSLGVPAIAVGIAGILLAAVVGALIDDKFADALNNEIIRPAH.

Transmembrane regions (helical) follow at residues 139-161 (SWVLSGIASSVALGIFSATLGAY) and 165-187 (LGVPAIAVGIAGILLAAVVGALI).

This sequence belongs to the channel forming colicin family.

It localises to the cell membrane. In terms of biological role, this colicin is a channel-forming colicin. This class of transmembrane toxins depolarize the cytoplasmic membrane, leading to dissipation of cellular energy. Its function is as follows. Colicins are polypeptide toxins produced by and active against E.coli and closely related bacteria. The protein is Colicin-A (caa) of Escherichia coli.